We begin with the raw amino-acid sequence, 82 residues long: RNA-binding protein Hfq (82 aa).

The Sm domain maps to 9 to 69; that stretch reads DHFLNQLRKE…ISTFSPARNV (61 aa).

Belongs to the Hfq family. Homohexamer.

Functionally, RNA chaperone that binds small regulatory RNA (sRNAs) and mRNAs to facilitate mRNA translational regulation in response to envelope stress, environmental stress and changes in metabolite concentrations. Also binds with high specificity to tRNAs. This Exiguobacterium sp. (strain ATCC BAA-1283 / AT1b) protein is RNA-binding protein Hfq.